Consider the following 526-residue polypeptide: Bifunctional purine biosynthesis protein PurH (526 aa).

One can recognise an MGS-like domain in the interval 1 to 147 (MPSIKRALIS…KNWKHVAIVT (147 aa)).

Belongs to the PurH family.

The enzyme catalyses (6R)-10-formyltetrahydrofolate + 5-amino-1-(5-phospho-beta-D-ribosyl)imidazole-4-carboxamide = 5-formamido-1-(5-phospho-D-ribosyl)imidazole-4-carboxamide + (6S)-5,6,7,8-tetrahydrofolate. It carries out the reaction IMP + H2O = 5-formamido-1-(5-phospho-D-ribosyl)imidazole-4-carboxamide. Its pathway is purine metabolism; IMP biosynthesis via de novo pathway; 5-formamido-1-(5-phospho-D-ribosyl)imidazole-4-carboxamide from 5-amino-1-(5-phospho-D-ribosyl)imidazole-4-carboxamide (10-formyl THF route): step 1/1. It participates in purine metabolism; IMP biosynthesis via de novo pathway; IMP from 5-formamido-1-(5-phospho-D-ribosyl)imidazole-4-carboxamide: step 1/1. The polypeptide is Bifunctional purine biosynthesis protein PurH (Neisseria meningitidis serogroup C / serotype 2a (strain ATCC 700532 / DSM 15464 / FAM18)).